We begin with the raw amino-acid sequence, 144 residues long: Giant hemoglobins B chain (144 aa).

In terms of domain architecture, Globin spans 3–144 (VCGPLQRLKV…LNVITNGIQG (142 aa)). His-96 serves as a coordination point for heme b.

It belongs to the globin family. Part of giant hemoglobin C1, V1 and V2. This worm has three different extracellular Hbs: two dissolved in the vascular blood, V1 (CA. 3,500 kDa) and V2 (CA. 400 kDa), and one in the coelomic fluid, C1 (CA. 400 kDa). V1 consists of four heme-containing, globin chains (B-E) and four linker chains (L1-L4). V2 consists of six globin chains (A-F) and C1 consists of five globin chains (A-E).

The protein resides in the secreted. It is found in the extracellular space. The polypeptide is Giant hemoglobins B chain (Riftia pachyptila (Vent tube worm)).